An 833-amino-acid polypeptide reads, in one-letter code: Vacuolar protein sorting-associated protein 16 homolog (833 aa).

It belongs to the VPS16 family. Component of the homotypic fusion and vacuole protein sorting (HOPS) complex, composed of Vps16A, car/Vps33A, dor/Vps18, Vps39, Vps11 and lt/Vps41. Interacts with Syx17 (via SNARE domain); the interaction may involve multiple components of the HOPS complex and may promote assembly of the Syx17-Snap29-Vamp7 trans-SNARE complex. Component of the class C core vacuole/endosome tethering (CORVET) complex composed of at least Vps8, dor/Vps18, car/Vps33A and Vps16A; unlike in other species, Vps11 is not part of the Drosophila complex. Due to the reduced number of components the Drosophila CORVET complex is often referred to as the miniCORVET complex. The tethering complex core made up of Vps16A, car/Vps33A and dor/Vps18 and shared by both HOPS and CORVET, preferentially associates with CORVET-specific Vps8 over HOPS-specific lt/Vps41. Interacts with Rab2 (GTP-bound form).

The protein localises to the late endosome membrane. The protein resides in the lysosome membrane. It is found in the cytoplasmic vesicle. It localises to the autophagosome. In terms of biological role, core component of the class C core vacuole/endosome tethering (CORVET) and the homotypic fusion and vacuole protein sorting (HOPS) tethering complexes involved in endo-lysosomal vesicle trafficking and lysosome biogenesis. The CORVET complex facilitates docking and fusion of endosomal vesicles during endosome maturation, acts upstream of HOPS, but is not involved in autophagic flux. The CORVET complex may cooperate with the early endosomal tether Rbsn-5 to mediate endosomal fusion. The HOPS complex facilitates docking and fusion of lysosomes with late endosomes and several other types of vesicles. The HOPS complex is also involved in autophagy and crinophagy (the elimination of unused secretory granules through their fusion with lysosomes). The HOPS complex mediates autophagocitic flux, probably by binding autophagosome-associated Syx17/syntaxin 17, promoting assembly of the trans-SNARE complex and instigating autophagosome-lysosome fusion. Independent of Syx17/syntaxin 17, HOPS is involved in biosynthetic transport to lysosomes and lysosome-related organelles such as eye-pigment granules. Required for endocytic degradation of boss/bride of sevenless and N/Notch in developing ommatidia. The protein is Vacuolar protein sorting-associated protein 16 homolog of Drosophila melanogaster (Fruit fly).